The chain runs to 95 residues: Small ribosomal subunit protein uS17 (95 aa).

The protein belongs to the universal ribosomal protein uS17 family. In terms of assembly, part of the 30S ribosomal subunit.

In terms of biological role, one of the primary rRNA binding proteins, it binds specifically to the 5'-end of 16S ribosomal RNA. In Phytoplasma australiense, this protein is Small ribosomal subunit protein uS17.